The chain runs to 432 residues: Adenylosuccinate synthetase (432 aa).

Residues 13–19 (GDEGKGK) and 41–43 (GHT) contribute to the GTP site. Catalysis depends on Asp-14, which acts as the Proton acceptor. Asp-14 and Gly-41 together coordinate Mg(2+). Residues 14-17 (DEGK), 39-42 (NAGH), Thr-130, Arg-144, Gln-225, Thr-240, and Arg-304 contribute to the IMP site. The active-site Proton donor is the His-42. 300–306 (AVTGRPR) contributes to the substrate binding site. GTP-binding positions include Arg-306, 332 to 334 (KLD), and 415 to 417 (STG).

This sequence belongs to the adenylosuccinate synthetase family. In terms of assembly, homodimer. It depends on Mg(2+) as a cofactor.

It is found in the cytoplasm. It carries out the reaction IMP + L-aspartate + GTP = N(6)-(1,2-dicarboxyethyl)-AMP + GDP + phosphate + 2 H(+). Its pathway is purine metabolism; AMP biosynthesis via de novo pathway; AMP from IMP: step 1/2. Plays an important role in the de novo pathway of purine nucleotide biosynthesis. Catalyzes the first committed step in the biosynthesis of AMP from IMP. This chain is Adenylosuccinate synthetase, found in Haemophilus influenzae (strain PittGG).